We begin with the raw amino-acid sequence, 291 residues long: MLRARPALWAAALTALTLLRGPPAARAGAGTMGAGPVVRCEPCDARAVAQCAPPPPSPPCAELVREPGCGCCLTCALREGQPCGVYTERCGSGLRCQPPPGDPRPLQALLDGRGLCANASAVGRLRPYLLPSASGNGSESEEDHSMGSTENQAGPSTHRVPVSKFHPIHTKMDVIKKGHAKDSQRYKVDYESQSTDTQNFSSESKRETEYGPCRREMEDTLNHLKFLNMLSPRGIHIPNCDKKGFYKKKQCRPSKGRKRGFCWCVDKYGQPLPGFDVKGKGDVHCYSMESK.

The first 27 residues, 1–27 (MLRARPALWAAALTALTLLRGPPAARA), serve as a signal peptide directing secretion. The IGF-binding stretch occupies residues 28–134 (GAGTMGAGPV…LRPYLLPSAS (107 aa)). The IGFBP N-terminal domain maps to 36–119 (PVVRCEPCDA…LDGRGLCANA (84 aa)). Intrachain disulfides connect cysteine 40-cysteine 69, cysteine 43-cysteine 71, cysteine 51-cysteine 72, cysteine 60-cysteine 75, cysteine 83-cysteine 96, and cysteine 90-cysteine 116. N-linked (GlcNAc...) asparagine glycans are attached at residues asparagine 118 and asparagine 136. Disordered stretches follow at residues 132–162 (SASG…RVPV) and 177–211 (KGHA…TEYG). Residues 146–155 (MGSTENQAGP) are compositionally biased toward polar residues. Serine 148 bears the Phosphoserine mark. Residues 177–190 (KGHAKDSQRYKVDY) are compositionally biased toward basic and acidic residues. The span at 191 to 202 (ESQSTDTQNFSS) shows a compositional bias: polar residues. The N-linked (GlcNAc...) asparagine glycan is linked to asparagine 199. Serine 201 is modified (phosphoserine). The Thyroglobulin type-1 domain occupies 210 to 285 (YGPCRREMED…DVKGKGDVHC (76 aa)). 3 cysteine pairs are disulfide-bonded: cysteine 213–cysteine 240, cysteine 251–cysteine 262, and cysteine 264–cysteine 285.

Interacts with XLKD1. Binds IGF2 more than IGF1. Forms a ternary complex of about 140 to 150 kDa with IGF1 or IGF2 and a 85 kDa glycoprotein (ALS). Interacts with humanin; humanin competes with importin KPNB1 for binding to IGFBP3, blocking IGFBP3 nuclear import and IGFBP3-mediated apoptosis. Interacts with TMEM219. Interacts with RXRA; this interaction modulates the transcriptional activity of RXRA. Interacts with LRP1; this interaction mediates cell growth inhibition independent of IGF1. In terms of processing, phosphorylated by FAM20C in the extracellular medium. Phosphorylated by CK2; resulting in decreased nuclear localization. As to expression, plasma; expressed by most tissues.

The protein resides in the secreted. The protein localises to the nucleus. Functionally, multifunctional protein that plays a critical role in regulating the availability of IGFs such as IGF1 and IGF2 to their receptors and thereby regulates IGF-mediated cellular processes including proliferation, differentiation, and apoptosis in a cell-type specific manner. Also exhibits IGF-independent antiproliferative and apoptotic effects mediated by its receptor TMEM219/IGFBP-3R. Inhibits the positive effect of humanin on insulin sensitivity. Promotes testicular germ cell apoptosis. Acts via LRP-1/alpha2M receptor, also known as TGF-beta type V receptor, to mediate cell growth inhibition independent of IGF1. Mechanistically, induces serine-specific dephosphorylation of IRS1 or IRS2 upon ligation to its receptor, leading to the inhibitory cascade. In the nucleus, interacts with transcription factors such as retinoid X receptor-alpha/RXRA to regulate transcriptional signaling and apoptosis. In Bos taurus (Bovine), this protein is Insulin-like growth factor-binding protein 3 (IGFBP3).